A 333-amino-acid chain; its full sequence is UDP-N-acetylglucosamine 4,6-dehydratase (inverting) (333 aa).

NADP(+) is bound by residues 19–22, 43–48, 67–68, Ala87, Lys91, and 129–130; these read TGSF, SRDELK, DV, and LS. Lys91 provides a ligand contact to substrate. Residue Lys133 is part of the active site. Tyr141 and Lys145 together coordinate NADP(+). Asn173 provides a ligand contact to substrate. Residue 174–178 participates in NADP(+) binding; it reads VVGSR. Val181, Thr199, Arg258, and Glu261 together coordinate substrate.

This sequence belongs to the polysaccharide synthase family. Homohexamer. It depends on NADP(+) as a cofactor.

It catalyses the reaction UDP-N-acetyl-alpha-D-glucosamine = UDP-2-acetamido-2,6-dideoxy-beta-L-arabino-hex-4-ulose + H2O. Catalyzes the first step in the biosynthesis of pseudaminic acid, a sialic-acid-like sugar that is used to modify flagellin. Has both C6 dehydratase and C5 epimerase activities that result in the production of both UDP-2-acetamido-2,6-dideoxy-beta-L-arabino-4-hexulose and UDP-2-acetamido-2,6-dideoxy-alpha-D-xylo-4-hexulose. The sequence is that of UDP-N-acetylglucosamine 4,6-dehydratase (inverting) (pseB) from Helicobacter pylori (strain ATCC 700392 / 26695) (Campylobacter pylori).